The primary structure comprises 57 residues: UPF0434 protein Spea_1772 (57 aa).

It belongs to the UPF0434 family.

This chain is UPF0434 protein Spea_1772, found in Shewanella pealeana (strain ATCC 700345 / ANG-SQ1).